The primary structure comprises 191 residues: Clusterin (191 aa).

N-linked (GlcNAc...) asparagine glycans are attached at residues N79, N116, N142, and N162. At S184 the chain carries Phosphoserine.

The protein belongs to the clusterin family. In terms of assembly, antiparallel disulfide-linked heterodimer of an alpha chain and a beta chain. Self-associates and forms higher oligomers. Interacts with a broad range of misfolded proteins, including APP, APOC2 and LYZ. Slightly acidic pH promotes interaction with misfolded proteins. Forms high-molecular weight oligomers upon interaction with misfolded proteins. Interacts with APOA1, LRP2, CLUAP1 and PON1. Interacts with the complement membrane attack complex. Interacts (via alpha chain) with XRCC6. Interacts with SYVN1, COMMD1, BTRC, CUL1 and with ubiquitin and SCF (SKP1-CUL1-F-box protein) E3 ubiquitin-protein ligase complexes. Interacts (via alpha chain) with BAX in stressed cells, where BAX undergoes a conformation change leading to association with the mitochondrial membrane. Does not interact with BAX in unstressed cells. Found in a complex with LTF, CLU, EPPIN and SEMG1. Interacts (immaturely glycosylated pre-secreted form) with HSPA5; this interaction promotes CLU stability and facilitates stress-induced CLU retrotranslocation from the secretory pathway to the mitochondria, thereby reducing stress-induced apoptosis by stabilizing mitochondrial membrane integrity. Interacts with BCL2L1; this interaction releases and activates BAX and promotes cell death. Interacts with TGFBR2 and ACVR1. Interacts (secreted form) with STMN3; this interaction may act as an important modulator during neuronal differentiation. Proteolytically cleaved on its way through the secretory system, probably within the Golgi lumen. Proteolytic cleavage is not necessary for its chaperone activity. All non-secreted forms are not proteolytically cleaved. Chaperone activity of uncleaved forms is dependent on a non-reducing environment. Post-translationally, polyubiquitinated, leading to proteasomal degradation. Under cellular stress, the intracellular level of cleaved form is reduced due to proteasomal degradation. In terms of processing, heavily N-glycosylated. About 30% of the protein mass is comprised of complex N-linked carbohydrate. Endoplasmic reticulum (ER) stress induces changes in glycosylation status and increases level of hypoglycosylated forms. Core carbohydrates are essential for chaperone activity. Non-secreted forms are hypoglycosylated or unglycosylated.

Its subcellular location is the secreted. It is found in the nucleus. The protein localises to the cytoplasm. It localises to the mitochondrion membrane. The protein resides in the cytosol. Its subcellular location is the microsome. It is found in the endoplasmic reticulum. The protein localises to the mitochondrion. It localises to the perinuclear region. The protein resides in the cytoplasmic vesicle. Its subcellular location is the secretory vesicle. It is found in the chromaffin granule. Functionally, functions as extracellular chaperone that prevents aggregation of non native proteins. Prevents stress-induced aggregation of blood plasma proteins. Inhibits formation of amyloid fibrils by APP, APOC2, B2M, CALCA, CSN3, SNCA and aggregation-prone LYZ variants (in vitro). Does not require ATP. Maintains partially unfolded proteins in a state appropriate for subsequent refolding by other chaperones, such as HSPA8/HSC70. Does not refold proteins by itself. Binding to cell surface receptors triggers internalization of the chaperone-client complex and subsequent lysosomal or proteasomal degradation. When secreted, protects cells against apoptosis and against cytolysis by complement: inhibits assembly of the complement membrane attack complex (MAC) by preventing polymerization of C9 pore component of the MAC complex. Intracellular forms interact with ubiquitin and SCF (SKP1-CUL1-F-box protein) E3 ubiquitin-protein ligase complexes and promote the ubiquitination and subsequent proteasomal degradation of target proteins. Promotes proteasomal degradation of COMMD1 and IKBKB. Modulates NF-kappa-B transcriptional activity. Following stress, promotes apoptosis. Inhibits apoptosis when associated with the mitochondrial membrane by interference with BAX-dependent release of cytochrome c into the cytoplasm. Plays a role in the regulation of cell proliferation. An intracellular form suppresses stress-induced apoptosis by stabilizing mitochondrial membrane integrity through interaction with HSPA5. Secreted form does not affect caspase or BAX-mediated intrinsic apoptosis and TNF-induced NF-kappa-B-activity. Secreted form act as an important modulator during neuronal differentiation through interaction with STMN3. Plays a role in the clearance of immune complexes that arise during cell injury. This Mesocricetus auratus (Golden hamster) protein is Clusterin.